Here is a 402-residue protein sequence, read N- to C-terminus: Putative PDZ domain-containing protein PDZK1P1 (402 aa).

PDZ domains are found at residues 12–93 (RLCY…VDKE) and 121–206 (IVEM…VDKE). Positions 230–258 (GSVKEAPAPTPTSLEVSSPPDTTEEEDHK) are disordered. Polar residues predominate over residues 240–250 (PTSLEVSSPPD). One can recognise a PDZ 3 domain in the interval 261-341 (LCRLAKGENG…NVTLLVCGKK (81 aa)). Residues 362-402 (DTPPDSKEGIVVESKHDSHMAKERAHSTASHSSSNSEDTEM) form a disordered region. The segment covering 365 to 387 (PDSKEGIVVESKHDSHMAKERAH) has biased composition (basic and acidic residues). Residues 388 to 402 (STASHSSSNSEDTEM) show a composition bias toward low complexity.

This sequence belongs to the NHER family.

The chain is Putative PDZ domain-containing protein PDZK1P1 from Homo sapiens (Human).